The following is a 242-amino-acid chain: tRNA pseudouridine synthase A (242 aa).

Catalysis depends on Asp51, which acts as the Nucleophile. Tyr107 contacts substrate.

Belongs to the tRNA pseudouridine synthase TruA family. In terms of assembly, homodimer.

The catalysed reaction is uridine(38/39/40) in tRNA = pseudouridine(38/39/40) in tRNA. In terms of biological role, formation of pseudouridine at positions 38, 39 and 40 in the anticodon stem and loop of transfer RNAs. The chain is tRNA pseudouridine synthase A from Helicobacter pylori (strain ATCC 700392 / 26695) (Campylobacter pylori).